Reading from the N-terminus, the 1214-residue chain is BOS complex subunit NOMO1 (1214 aa).

A signal peptide spans 1 to 23 (MRAGRCAAALLLLLLSGAGRAIG). Residues 24–1150 (SEDIVVGCGG…RKLPEQDIAQ (1127 aa)) lie on the Extracellular side of the membrane. N-linked (GlcNAc...) asparagine glycans are attached at residues Asn42, Asn210, and Asn610. Positions 692–720 (KSAQELRREQQLAEIETRRQEREKNGKEE) form a coiled coil. Residues 708–726 (TRRQEREKNGKEEGEEGRA) show a composition bias toward basic and acidic residues. The disordered stretch occupies residues 708–733 (TRRQEREKNGKEEGEEGRARPPGQEM). The helical transmembrane segment at 1151 to 1167 (GSYIALPLTLLLLLAGY) threads the bilayer. Topologically, residues 1168 to 1214 (NHDKLIPLLLQLTSRLQGVRALGQAASDSSGPEDMKRQTKKQKTRRT) are cytoplasmic. The disordered stretch occupies residues 1190 to 1214 (GQAASDSSGPEDMKRQTKKQKTRRT). 2 positions are modified to phosphoserine: Ser1196 and Ser1197. The span at 1205–1214 (QTKKQKTRRT) shows a compositional bias: basic residues.

As to quaternary structure, component of the back of Sec61 (BOS) complex, composed of NCLN/Nicalin, NOMO (NOMO1, NOMO2 or NOMO3) and TMEM147. The BOS complex is part of the multi-pass translocon (MPT) complex, composed of three subcomplexes, the GEL complex (composed of RAB5IF/OPTI and TMCO1), the BOS complex (composed of NCLN/Nicalin, NOMO and TMEM147) and the PAT complex (composed of WDR83OS/Asterix and CCDC47). The MPT complex associates with the SEC61 complex.

It is found in the endoplasmic reticulum membrane. Functionally, component of the multi-pass translocon (MPT) complex that mediates insertion of multi-pass membrane proteins into the lipid bilayer of membranes. The MPT complex takes over after the SEC61 complex: following membrane insertion of the first few transmembrane segments of proteins by the SEC61 complex, the MPT complex occludes the lateral gate of the SEC61 complex to promote insertion of subsequent transmembrane regions. This chain is BOS complex subunit NOMO1, found in Mus musculus (Mouse).